An 856-amino-acid polypeptide reads, in one-letter code: Inactive rhomboid protein 2 (856 aa).

Residues Met-1–Ser-115 are disordered. Topologically, residues Met-1–Thr-409 are cytoplasmic. Ser-90 carries the post-translational modification Phosphoserine. The span at Pro-94–Pro-106 shows a compositional bias: basic and acidic residues. 2 positions are modified to phosphoserine: Ser-113 and Ser-117. Residues Pro-165–Pro-184 form a disordered region. An involved in interaction with FRMD8 region spans residues Ala-191–Ser-271. Residues Ser-323, Ser-325, and Ser-328 each carry the phosphoserine modification. Residues Phe-410 to Phe-430 form a helical membrane-spanning segment. Residues Ala-431–Ser-660 are Lumenal-facing. Residues Gly-531–Pro-553 form a disordered region. The helical transmembrane segment at Leu-661 to Leu-681 threads the bilayer. The Cytoplasmic portion of the chain corresponds to Arg-682–Arg-692. The helical transmembrane segment at Ile-693–Pro-713 threads the bilayer. Residues Tyr-714–Arg-715 are Lumenal-facing. The chain crosses the membrane as a helical span at residues Ala-716–Phe-736. Topologically, residues Gln-737–Lys-747 are cytoplasmic. Residues Ala-748 to Ile-768 traverse the membrane as a helical segment. Residues Asp-769–His-773 are Lumenal-facing. The chain crosses the membrane as a helical span at residues Ile-774–Gly-794. At Thr-795–Arg-802 the chain is on the cytoplasmic side. The helical transmembrane segment at Ala-803–Leu-823 threads the bilayer. Over Tyr-824 to His-856 the chain is Lumenal.

This sequence belongs to the peptidase S54 family. Interacts with EGF. Interacts (via cytoplasmic N-terminus) with FRMD8/iTAP; this interaction leads to mutual protein stabilization. Interacts with ADAM17/TACE. In terms of tissue distribution, found in the epidermis and esophageal epithelium.

Its subcellular location is the endoplasmic reticulum membrane. The protein localises to the cell membrane. Its function is as follows. Regulates ADAM17 protease, a sheddase of the epidermal growth factor (EGF) receptor ligands and TNF, thereby plays a role in sleep, cell survival, proliferation, migration and inflammation. Does not exhibit any protease activity on its own. The polypeptide is Inactive rhomboid protein 2 (RHBDF2) (Homo sapiens (Human)).